We begin with the raw amino-acid sequence, 125 residues long: Large ribosomal subunit protein bL19 (125 aa).

This sequence belongs to the bacterial ribosomal protein bL19 family.

Its function is as follows. This protein is located at the 30S-50S ribosomal subunit interface and may play a role in the structure and function of the aminoacyl-tRNA binding site. In Wolbachia pipientis subsp. Culex pipiens (strain wPip), this protein is Large ribosomal subunit protein bL19.